A 1167-amino-acid polypeptide reads, in one-letter code: Rhoptry neck protein 2-like protein 2 (1167 aa).

The signal sequence occupies residues 1 to 20; it reads MSSNLAFLSLSLAESTASLG. Residues 21 to 977 are Cytoplasmic-facing; the sequence is KSLEETRTRL…WVAKRSRSRK (957 aa). The interval 55-94 is disordered; it reads GPGLSVEGKQTEQMSRKSAEDTRASSLSSDPDDGRAAQLA. Residues 68-77 show a composition bias toward basic and acidic residues; that stretch reads MSRKSAEDTR. A helical membrane pass occupies residues 978–998; it reads LAIVSVLSLGLIFAYTLLSAL. Residues 999–1167 are Extracellular-facing; it reads DIAQFLTDSG…TPQRAQDGSR (169 aa). The cysteines at positions 1015 and 1026 are disulfide-linked.

The protein belongs to the apicomplexan parasites RON2 family.

It is found in the secreted. The protein localises to the host cell membrane. Functionally, may play a role in host cell invasion. The sequence is that of Rhoptry neck protein 2-like protein 2 (RON2L2) from Toxoplasma gondii (strain ATCC 50611 / Me49).